The sequence spans 289 residues: Probable endonuclease 4 (289 aa).

His74, His115, Glu150, Asp184, His187, His218, Asp231, His233, and Glu263 together coordinate Zn(2+).

This sequence belongs to the AP endonuclease 2 family. Zn(2+) serves as cofactor.

The catalysed reaction is Endonucleolytic cleavage to 5'-phosphooligonucleotide end-products.. Endonuclease IV plays a role in DNA repair. It cleaves phosphodiester bonds at apurinic or apyrimidinic (AP) sites, generating a 3'-hydroxyl group and a 5'-terminal sugar phosphate. In Mycoplasma capricolum subsp. capricolum (strain California kid / ATCC 27343 / NCTC 10154), this protein is Probable endonuclease 4.